The following is a 223-amino-acid chain: Imidazoleglycerol-phosphate dehydratase (223 aa).

The protein belongs to the imidazoleglycerol-phosphate dehydratase family.

The enzyme catalyses D-erythro-1-(imidazol-4-yl)glycerol 3-phosphate = 3-(imidazol-4-yl)-2-oxopropyl phosphate + H2O. It functions in the pathway amino-acid biosynthesis; L-histidine biosynthesis; L-histidine from 5-phospho-alpha-D-ribose 1-diphosphate: step 6/9. This Candida albicans (Yeast) protein is Imidazoleglycerol-phosphate dehydratase (HIS3).